The sequence spans 150 residues: General odorant-binding protein 19d (150 aa).

An N-terminal signal peptide occupies residues 1–23 (MSHLVHLTVLLLVGILCLGATSA). Intrachain disulfides connect cysteine 41–cysteine 72, cysteine 68–cysteine 126, and cysteine 116–cysteine 135.

This sequence belongs to the PBP/GOBP family. Expressed in the antenna, mostly on the anterior surface of the third antennal segment. Also detected in the maxillary palps and in cells at the bases of the taste hairs on the proboscis and internal taste organs of the head.

The protein localises to the secreted. The polypeptide is General odorant-binding protein 19d (Obp19d) (Drosophila melanogaster (Fruit fly)).